Consider the following 199-residue polypeptide: V-type proton ATPase subunit E (199 aa).

Belongs to the V-ATPase E subunit family.

Produces ATP from ADP in the presence of a proton gradient across the membrane. The protein is V-type proton ATPase subunit E of Clostridium botulinum (strain Okra / Type B1).